The following is a 237-amino-acid chain: Concanavalin-A (237 aa).

The Mn(2+) site is built by Glu8 and Asp10. The Ca(2+) site is built by Asp10, Tyr12, Asn14, and Asp19. Tyr12 contacts a carbohydrate. Mn(2+) is bound by residues Asp19 and His24. Residue 99-100 coordinates a carbohydrate; sequence LY. Asp208 contributes to the Ca(2+) binding site. Arg228 contacts a carbohydrate.

This sequence belongs to the leguminous lectin family. In terms of assembly, homotetramer.

Its function is as follows. Glucose/D-mannose specific lectin. This is Concanavalin-A from Canavalia lineata (Beach bean).